The following is a 350-amino-acid chain: Phosphoribosylformylglycinamidine cyclo-ligase (350 aa).

The protein belongs to the AIR synthase family.

It localises to the cytoplasm. It carries out the reaction 2-formamido-N(1)-(5-O-phospho-beta-D-ribosyl)acetamidine + ATP = 5-amino-1-(5-phospho-beta-D-ribosyl)imidazole + ADP + phosphate + H(+). Its pathway is purine metabolism; IMP biosynthesis via de novo pathway; 5-amino-1-(5-phospho-D-ribosyl)imidazole from N(2)-formyl-N(1)-(5-phospho-D-ribosyl)glycinamide: step 2/2. The sequence is that of Phosphoribosylformylglycinamidine cyclo-ligase from Pseudoalteromonas translucida (strain TAC 125).